The sequence spans 436 residues: Nucleolar protein 4-like (436 aa).

The disordered stretch occupies residues 1–184 (MSDSTWMSAD…KMNDSEGMDP (184 aa)). The span at 41 to 61 (SESGSGNGSSTLNPSTSSSTQ) shows a compositional bias: low complexity. Serine 130 is subject to Phosphoserine. Residues 160-169 (ADDDDDDHDD) are compositionally biased toward acidic residues. A compositionally biased stretch (basic and acidic residues) spans 170–184 (HEDNDKMNDSEGMDP). The residue at position 295 (serine 295) is a Phosphoserine. Polar residues predominate over residues 351-366 (QPPASLQTGNHSNGPT). Residues 351 to 400 (QPPASLQTGNHSNGPTDLSMKGGASTTSTTPTPTPSSTSTSRPVPTAQLS) are disordered. Low complexity predominate over residues 375–396 (STTSTTPTPTPSSTSTSRPVPT).

This Homo sapiens (Human) protein is Nucleolar protein 4-like (NOL4L).